Consider the following 120-residue polypeptide: Prefoldin subunit beta (120 aa).

It belongs to the prefoldin subunit beta family. In terms of assembly, heterohexamer of two alpha and four beta subunits.

It is found in the cytoplasm. In terms of biological role, molecular chaperone capable of stabilizing a range of proteins. Seems to fulfill an ATP-independent, HSP70-like function in archaeal de novo protein folding. This is Prefoldin subunit beta from Methanothrix thermoacetophila (strain DSM 6194 / JCM 14653 / NBRC 101360 / PT) (Methanosaeta thermophila).